The following is a 527-amino-acid chain: ATP synthase subunit alpha (527 aa).

ATP is bound at residue 177-184; sequence GDRQTGKT.

This sequence belongs to the ATPase alpha/beta chains family. In terms of assembly, F-type ATPases have 2 components, CF(1) - the catalytic core - and CF(0) - the membrane proton channel. CF(1) has five subunits: alpha(3), beta(3), gamma(1), delta(1), epsilon(1). CF(0) has four main subunits: a(1), b(1), b'(1) and c(9-12).

The protein localises to the cell membrane. It catalyses the reaction ATP + H2O + 4 H(+)(in) = ADP + phosphate + 5 H(+)(out). In terms of biological role, produces ATP from ADP in the presence of a proton gradient across the membrane. The alpha chain is a regulatory subunit. In Roseiflexus sp. (strain RS-1), this protein is ATP synthase subunit alpha.